We begin with the raw amino-acid sequence, 477 residues long: Adenosylhomocysteinase (477 aa).

Substrate is bound by residues Thr63, Asp142, and Glu202. 203-205 (TTT) provides a ligand contact to NAD(+). Lys232 and Asp236 together coordinate substrate. Residues Asn237, 266–271 (GYGDVG), Glu289, Asn324, 345–347 (IGH), and Asn390 contribute to the NAD(+) site.

This sequence belongs to the adenosylhomocysteinase family. It depends on NAD(+) as a cofactor.

Its subcellular location is the cytoplasm. It catalyses the reaction S-adenosyl-L-homocysteine + H2O = L-homocysteine + adenosine. It participates in amino-acid biosynthesis; L-homocysteine biosynthesis; L-homocysteine from S-adenosyl-L-homocysteine: step 1/1. Functionally, may play a key role in the regulation of the intracellular concentration of adenosylhomocysteine. In Leptothrix cholodnii (strain ATCC 51168 / LMG 8142 / SP-6) (Leptothrix discophora (strain SP-6)), this protein is Adenosylhomocysteinase.